The primary structure comprises 297 residues: ClpXP adapter protein SpxH (297 aa).

This sequence belongs to the SpxH family. As to quaternary structure, interacts with Spx.

It localises to the cytoplasm. In terms of biological role, adapter protein required for efficient degradation of Spx by ClpXP under non-stress conditions. Interaction with Spx stabilizes Spx and exposes the C-terminus of Spx for recognition and proteolysis by ClpXP. The protein is ClpXP adapter protein SpxH of Bacillus thuringiensis subsp. konkukian (strain 97-27).